The chain runs to 456 residues: MISRIKSFKNALNYDKMNCIEIILRRNDLMSTSFENKATNRGVITFTISQDKIKPALDKAFNKIKKDLNAPGFRKGHMPRPVFNQKFGEEVLYEDALNIVLPEAYEAAVTELGLDVVAQPKIDVVSMEKGKEWTLSAEVVTKPEVKLGDYKNLVVEVDASKEVSDEDVDAKIERERQNLAELIIKDGEAAQGDTVVIDFVGSVDGVEFDGGKGDNFSLELGSGQFIPGFEDQLVGAKAGDEVEVNVTFPESYQAEDLAGKAAKFMTTIHEVKTKEVPELDDELAKDIDEDVDTLEDLKVKYRKELEAAQETAYDDAVEGAAIELAVANAEIVDLPEEMIHEEVNRSVNEFMGNMQRQGISPEMYFQLTGTTQEDLHNQYSAEADKRVKTNLVIEAIAKAEGFEATDSEIEQEINDLATEYNMPADQVRSLLSADMLKHDIAMKKAVEVITSTASVK.

In terms of domain architecture, PPIase FKBP-type spans Gly192–Pro277.

Belongs to the FKBP-type PPIase family. Tig subfamily.

The protein resides in the cytoplasm. It catalyses the reaction [protein]-peptidylproline (omega=180) = [protein]-peptidylproline (omega=0). Functionally, involved in protein export. Acts as a chaperone by maintaining the newly synthesized protein in an open conformation. Functions as a peptidyl-prolyl cis-trans isomerase. The polypeptide is Trigger factor (Streptococcus pyogenes serotype M4 (strain MGAS10750)).